Consider the following 87-residue polypeptide: UPF0250 protein ETA_23570 (87 aa).

Belongs to the UPF0250 family.

This Erwinia tasmaniensis (strain DSM 17950 / CFBP 7177 / CIP 109463 / NCPPB 4357 / Et1/99) protein is UPF0250 protein ETA_23570.